The sequence spans 311 residues: Aspartate carbamoyltransferase catalytic subunit (311 aa).

Arginine 55 and threonine 56 together coordinate carbamoyl phosphate. Position 85 (lysine 85) interacts with L-aspartate. Residues arginine 106, histidine 135, and glutamine 138 each coordinate carbamoyl phosphate. L-aspartate-binding residues include arginine 168 and arginine 230. 2 residues coordinate carbamoyl phosphate: leucine 268 and proline 269.

This sequence belongs to the aspartate/ornithine carbamoyltransferase superfamily. ATCase family. As to quaternary structure, heterododecamer (2C3:3R2) of six catalytic PyrB chains organized as two trimers (C3), and six regulatory PyrI chains organized as three dimers (R2).

The enzyme catalyses carbamoyl phosphate + L-aspartate = N-carbamoyl-L-aspartate + phosphate + H(+). It functions in the pathway pyrimidine metabolism; UMP biosynthesis via de novo pathway; (S)-dihydroorotate from bicarbonate: step 2/3. Its function is as follows. Catalyzes the condensation of carbamoyl phosphate and aspartate to form carbamoyl aspartate and inorganic phosphate, the committed step in the de novo pyrimidine nucleotide biosynthesis pathway. This is Aspartate carbamoyltransferase catalytic subunit from Klebsiella pneumoniae (strain 342).